The following is a 62-amino-acid chain: Sperm protamine P1 (62 aa).

The tract at residues 1–62 (MARSRRHSRS…RCSRRRRRRC (62 aa)) is disordered.

This sequence belongs to the protamine P1 family. Testis.

Its subcellular location is the nucleus. It localises to the chromosome. Its function is as follows. Protamines substitute for histones in the chromatin of sperm during the haploid phase of spermatogenesis. They compact sperm DNA into a highly condensed, stable and inactive complex. In Planigale ingrami (Long-tailed planigale), this protein is Sperm protamine P1 (PRM1).